The chain runs to 315 residues: Lipase 3 (315 aa).

The first 18 residues, 1-18 (MLLKRLGLAALFSLSMVG), serve as a signal peptide directing secretion. C19 is lipidated: N-palmitoyl cysteine. C19 carries the S-diacylglycerol cysteine lipid modification. The AB hydrolase-1 domain maps to 69-296 (PLLLIHGFGG…MNDVGHVPMV (228 aa)). H74 is an active-site residue. The active-site Charge relay system is the S142.

This sequence belongs to the lipase/esterase LIP3/BchO family.

It is found in the cell membrane. The enzyme catalyses a triacylglycerol + H2O = a diacylglycerol + a fatty acid + H(+). This Moraxella sp. (strain TA144) protein is Lipase 3 (lip3).